The primary structure comprises 1529 residues: DNA (cytosine-5)-methyltransferase 1B (1529 aa).

Disordered stretches follow at residues 1–56 and 674–706; these read MVKS…RAAC and DDEL…TRSR. The span at 21 to 35 shows a compositional bias: basic and acidic residues; sequence QKKDEDTTDKGKLDE. The segment covering 674 to 694 has biased composition (acidic residues); the sequence is DDELEENEDEDAEEEAQIEEE. Residues 697-706 show a composition bias toward polar residues; sequence SKTPPSTRSR. BAH domains are found at residues 741–873 and 910–1049; these read LRIN…FSLP and ITYN…KQLP. An SAM-dependent MTase C5-type domain is found at 1093-1527; it reads LATLDIFAGC…RKLKEAVDAK (435 aa). C1198 is an active-site residue.

This sequence belongs to the class I-like SAM-binding methyltransferase superfamily. C5-methyltransferase family. As to expression, expressed in roots and inflorescences. Expressed in roots, panicles, anthers, pistils, endosperm and imbibed embryos. Expressed in tissues containing actively replicating and dividing cells, such as shoot and root meristems.

The protein localises to the nucleus. The enzyme catalyses a 2'-deoxycytidine in DNA + S-adenosyl-L-methionine = a 5-methyl-2'-deoxycytidine in DNA + S-adenosyl-L-homocysteine + H(+). Major CG methylase that methylates chromatin CpG residues and maintains DNA methylation. Plays a major role in genomic imprinting, regulation of embryogenesis and seed viability. Maintains DNA methylation at the FIE1 gene locus in the embryo. This is DNA (cytosine-5)-methyltransferase 1B (MET1B) from Oryza sativa subsp. japonica (Rice).